Reading from the N-terminus, the 191-residue chain is NF-kappa-B inhibitor-interacting Ras-like protein 2 (191 aa).

The small GTPase-like stretch occupies residues 1–191 (MGKSCKVVVC…KNKGSGSLDG (191 aa)). 11–18 (GQASVGKT) is a GTP binding site. The Effector region signature appears at 35–43 (MIETQEDIY). Residues 61 to 65 (DTRGL) and 120 to 123 (NKCD) contribute to the GTP site. Residues 169 to 191 (TQPQSKSAFPLSRKNKGSGSLDG) form a disordered region.

This sequence belongs to the small GTPase superfamily. Ras family. KappaB-Ras subfamily. As to quaternary structure, interacts with both NF-kappa-B inhibitor alpha (NFKBIA) and beta (NFKBIB) in vitro. However, it probably only interacts with NFKBIB in vivo. Interacts with GFOD1. As to expression, widely expressed.

It is found in the cytoplasm. Functionally, atypical Ras-like protein that acts as a potent regulator of NF-kappa-B activity by preventing the degradation of NF-kappa-B inhibitor beta (NFKBIB) by most signals, explaining why NFKBIB is more resistant to degradation. May act by blocking phosphorylation of NFKBIB and nuclear localization of p65/RELA NF-kappa-B subunit. It is unclear whether it acts as a GTPase. Both GTP- and GDP-bound forms block phosphorylation of NFKBIB. This is NF-kappa-B inhibitor-interacting Ras-like protein 2 (NKIRAS2) from Homo sapiens (Human).